Consider the following 111-residue polypeptide: Cornifelin homolog A (111 aa).

Belongs to the cornifelin family.

This is Cornifelin homolog A (cnfn-a) from Xenopus laevis (African clawed frog).